We begin with the raw amino-acid sequence, 289 residues long: Rhodopsin (289 aa).

The Extracellular segment spans residues 1–7 (YLVNPAA). A helical transmembrane segment spans residues 8–32 (YAALGAYMFLLILIGFPVNFLTLYV). Residues 33–44 (TIEHKKLRTPLN) lie on the Cytoplasmic side of the membrane. The chain crosses the membrane as a helical span at residues 45-67 (YILLNLAVANLFMVLGGFTTTMY). Topologically, residues 68–81 (TSMHGYFVLGRLGC) are extracellular. Cysteine 81 and cysteine 158 are oxidised to a cystine. Residues 82–104 (NLEGFFATMGGEIALWSLVVLAI) traverse the membrane as a helical segment. The 'Ionic lock' involved in activated form stabilization motif lies at 105-107 (ERW). Residues 105 to 123 (ERWIVVCKPISNFRFTEDH) are Cytoplasmic-facing. Residues 124–144 (AIMGLAFTWVMALSCAVPPLV) traverse the membrane as a helical segment. Over 145–173 (GWSRYIPEGMQCSCGVDYYTRAEGFNNES) the chain is Extracellular. N-linked (GlcNAc...) asparagine glycosylation is present at asparagine 171. The chain crosses the membrane as a helical span at residues 174-195 (FVIYMFIVHFLTPLIIISFCYG). The Cytoplasmic portion of the chain corresponds to 196 to 223 (RLLCAVKEAAAAQQESETTQRAEREVSR). Residues 224–245 (MVVMMVISFLMCWLPYASVAWY) traverse the membrane as a helical segment. Residues 246–257 (IFCNQGSEFGPI) lie on the Extracellular side of the membrane. A helical transmembrane segment spans residues 258–279 (FMTLPAFFAKSSAIYNPLIYIC). Lysine 267 carries the N6-(retinylidene)lysine modification. At 280–289 (MNKQFRHCMI) the chain is on the cytoplasmic side.

It belongs to the G-protein coupled receptor 1 family. Opsin subfamily. Post-translationally, phosphorylated on some or all of the serine and threonine residues present in the C-terminal region. In terms of processing, contains one covalently linked retinal chromophore.

Its subcellular location is the membrane. The protein resides in the cell projection. It is found in the cilium. The protein localises to the photoreceptor outer segment. In terms of biological role, photoreceptor required for image-forming vision at low light intensity. While most salt water fish species use retinal as chromophore, most freshwater fish use 3-dehydroretinal, or a mixture of retinal and 3-dehydroretinal. Light-induced isomerization of 11-cis to all-trans retinal triggers a conformational change that activates signaling via G-proteins. Subsequent receptor phosphorylation mediates displacement of the bound G-protein alpha subunit by arrestin and terminates signaling. The sequence is that of Rhodopsin (rho) from Cottocomephorus inermis (Longfin Baikal sculpin).